Reading from the N-terminus, the 134-residue chain is Ribonuclease VapC11 (134 aa).

Residues 2–126 enclose the PINc domain; it reads ILIDTSAWVE…ADFDVIARIT (125 aa). Mg(2+)-binding residues include D5 and D98.

Belongs to the PINc/VapC protein family. Mg(2+) serves as cofactor.

Toxic component of a type II toxin-antitoxin (TA) system. Acts as an RNase. Its toxic effects on cell growth and colony formation are neutralized by coexpression with cognate antitoxin VapB11. The chain is Ribonuclease VapC11 from Mycobacterium tuberculosis (strain CDC 1551 / Oshkosh).